The following is a 122-amino-acid chain: Large ribosomal subunit protein bL12 (122 aa).

This sequence belongs to the bacterial ribosomal protein bL12 family. As to quaternary structure, homodimer. Part of the ribosomal stalk of the 50S ribosomal subunit. Forms a multimeric L10(L12)X complex, where L10 forms an elongated spine to which 2 to 4 L12 dimers bind in a sequential fashion. Binds GTP-bound translation factors.

Its function is as follows. Forms part of the ribosomal stalk which helps the ribosome interact with GTP-bound translation factors. Is thus essential for accurate translation. In Streptococcus mutans serotype c (strain ATCC 700610 / UA159), this protein is Large ribosomal subunit protein bL12.